A 232-amino-acid chain; its full sequence is Y-linked testis-specific protein 1 (232 aa).

This sequence belongs to the SPIN/STSY family. Expressed in testis (at protein level).

The chain is Y-linked testis-specific protein 1 (Ssty1) from Mus musculus (Mouse).